Here is a 545-residue protein sequence, read N- to C-terminus: Threonine--tRNA ligase catalytic subunit (545 aa).

The segment at Asp139–Pro433 is catalytic. 3 residues coordinate Zn(2+): Cys231, His282, and His410.

Belongs to the class-II aminoacyl-tRNA synthetase family. Homodimer. Probably interacts with its editing subunit. Requires Zn(2+) as cofactor.

Its subcellular location is the cytoplasm. The enzyme catalyses tRNA(Thr) + L-threonine + ATP = L-threonyl-tRNA(Thr) + AMP + diphosphate + H(+). In terms of biological role, catalyzes the attachment of threonine to tRNA(Thr) in a two-step reaction: L-threonine is first activated by ATP to form Thr-AMP and then transferred to the acceptor end of tRNA(Thr). Also activates L-serine and transfers it to tRNA(Thr) but cannot deacylate incorrectly charged amino acid; unlike most archaea the editing function is found in a freestanding protein. The protein is Threonine--tRNA ligase catalytic subunit of Saccharolobus islandicus (strain M.16.4 / Kamchatka #3) (Sulfolobus islandicus).